Consider the following 320-residue polypeptide: Cytochrome f (320 aa).

An N-terminal signal peptide occupies residues Met-1–Ala-35. Tyr-36, Cys-56, Cys-59, and His-60 together coordinate heme. Residues Ile-286–Lys-306 form a helical membrane-spanning segment.

It belongs to the cytochrome f family. The 4 large subunits of the cytochrome b6-f complex are cytochrome b6, subunit IV (17 kDa polypeptide, petD), cytochrome f and the Rieske protein, while the 4 small subunits are PetG, PetL, PetM and PetN. The complex functions as a dimer. Heme serves as cofactor.

The protein resides in the plastid. It localises to the chloroplast thylakoid membrane. Its function is as follows. Component of the cytochrome b6-f complex, which mediates electron transfer between photosystem II (PSII) and photosystem I (PSI), cyclic electron flow around PSI, and state transitions. This chain is Cytochrome f, found in Dioscorea elephantipes (Elephant's foot yam).